Consider the following 264-residue polypeptide: Nuclear egress protein 1 (264 aa).

Residues 1–12 are compositionally biased toward basic residues; it reads MTVHKSRIRRSR. Positions 1–22 are disordered; sequence MTVHKSRIRRSRSLSVTHRIQK. Residues 83 to 187 form a CCCH-type zinc finger; that stretch reads CLEFSPYANE…HIVFQSRTLH (105 aa).

It belongs to the herpesviridae NEC1 protein family. In terms of assembly, forms a heterohexameric complex with NEC2. Interacts with capsid vertex specific component 2/CVC2; this interaction directs the capsid to the host inner nuclear membrane to initiate budding. In terms of processing, phosphorylated at serine residues in the N-terminus. This phosphorylation regulates the localization within the inner nuclear membrane.

Its subcellular location is the host nucleus inner membrane. Its function is as follows. Plays an essential role in virion nuclear egress, the first step of virion release from infected cell. Within the host nucleus, NEC1 interacts with the newly formed capsid through the vertexes and directs it to the inner nuclear membrane by associating with NEC2. Induces the budding of the capsid at the inner nuclear membrane as well as its envelopment into the perinuclear space. There, the NEC1/NEC2 complex promotes the fusion of the enveloped capsid with the outer nuclear membrane and the subsequent release of the viral capsid into the cytoplasm where it will reach the secondary budding sites in the host Golgi or trans-Golgi network. The polypeptide is Nuclear egress protein 1 (Human herpesvirus 6A (strain Uganda-1102) (HHV-6 variant A)).